The primary structure comprises 570 residues: Phosphoenolpyruvate-protein phosphotransferase (570 aa).

Histidine 189 acts as the Tele-phosphohistidine intermediate in catalysis. Phosphoenolpyruvate contacts are provided by arginine 296 and arginine 332. Positions 431 and 455 each coordinate Mg(2+). Phosphoenolpyruvate is bound by residues 454-455 (ND) and arginine 465. The Proton donor role is filled by cysteine 502.

The protein belongs to the PEP-utilizing enzyme family. Homodimer. Requires Mg(2+) as cofactor.

Its subcellular location is the cytoplasm. It carries out the reaction L-histidyl-[protein] + phosphoenolpyruvate = N(pros)-phospho-L-histidyl-[protein] + pyruvate. General (non sugar-specific) component of the phosphoenolpyruvate-dependent sugar phosphotransferase system (sugar PTS). This major carbohydrate active-transport system catalyzes the phosphorylation of incoming sugar substrates concomitantly with their translocation across the cell membrane. Enzyme I transfers the phosphoryl group from phosphoenolpyruvate (PEP) to the phosphoryl carrier protein (HPr). In Buchnera aphidicola subsp. Schizaphis graminum (strain Sg), this protein is Phosphoenolpyruvate-protein phosphotransferase (ptsI).